A 513-amino-acid chain; its full sequence is MKHNEVFGWTLKVLSFLLVVIPANALDKHGWRKQSIYSLLTDRFASTNPKPCNPEDREYCGGNWRGIIDKLDYIQGMGFTAIWISPIIKNIEGRTKYGEAYHGYWPQDLYTLNPHFGTEQDLIDLADALHDRGMYLMVDTVVNHMGSSDPRNIDYGIYRPFNQSSHYHPMCPIEQDKPLSLEQCWIGTEDMTLPDIDTENPQIIETLYNFIHDQVKQFKIDGLRVDATKHVRRTFWPGFCESAGVYCQGEEWTGQADLFCEWQEYMDGLHNFPVQGVAAESVIPLNDRALRKTAIAMNLVAHHCKDSTLLGLFLESQDAPRLAALNNDYTVLKNAMTLNLMSDGIPIVFYGQEQMFNGSHDPVNRPALWDQGYNTDGPLYQYTSKVNKIRRDLINSEDGEIYIRSITHAIMIGDHVMVMYKGPVITFITNYGAVDKEYLIKMPGSETMIDLLTCTLIEVEGEVMRTSIKKGEPKILYPYQLAFRDGFCQEQITLQEIDDVFMGRNEINGPDRK.

Positions 1 to 25 (MKHNEVFGWTLKVLSFLLVVIPANA) are cleaved as a signal peptide. The cysteines at positions 52 and 60 are disulfide-linked. Trp-105 provides a ligand contact to substrate. Position 143 (Asn-143) interacts with Ca(2+). His-144 serves as a coordination point for substrate. An N-linked (GlcNAc...) asparagine glycan is attached at Asn-162. A disulfide bridge connects residues Cys-171 and Cys-184. The Ca(2+) site is built by Glu-182 and Asp-195. Arg-224 serves as a coordination point for substrate. Residues Asp-226, His-230, and Glu-250 each coordinate Ca(2+). The active-site Nucleophile is Asp-226. 229–230 (KH) contacts substrate. The Proton donor role is filled by Glu-250. Gly-254 contributes to the substrate binding site. A disulfide bond links Cys-260 and Cys-304. Substrate is bound at residue Asp-318. The N-linked (GlcNAc...) asparagine glycan is linked to Asn-357. Arg-365 serves as a coordination point for substrate. An intrachain disulfide couples Cys-454 to Cys-488.

This sequence belongs to the glycosyl hydrolase 13 family. It depends on Ca(2+) as a cofactor.

The protein localises to the endoplasmic reticulum. It carries out the reaction Endohydrolysis of (1-&gt;4)-alpha-D-glucosidic linkages in polysaccharides containing three or more (1-&gt;4)-alpha-linked D-glucose units.. The chain is Alpha-amylase mde5 (mde5) from Schizosaccharomyces pombe (strain 972 / ATCC 24843) (Fission yeast).